The following is a 359-amino-acid chain: Popy class I histocompatibility antigen, alpha chain E (359 aa).

Residues 1 to 18 (GTLLLLLSEALALTETWA) form the signal peptide. The segment at 19 to 108 (GSHSLKYFHT…LRGYYNQTEA (90 aa)) is alpha-1. At 19-302 (GSHSLKYFHT…EPASQTTIPI (284 aa)) the chain is on the extracellular side. An N-linked (GlcNAc...) asparagine glycan is attached at asparagine 104. The segment at 109 to 200 (GSHTLQWMHG…EKGKETLLHL (92 aa)) is alpha-2. Intrachain disulfides connect cysteine 119/cysteine 182 and cysteine 221/cysteine 277. Residues 201-292 (DPPKTHVTHH…GLPEPLTLRW (92 aa)) are alpha-3. In terms of domain architecture, Ig-like C1-type spans 203-291 (PKTHVTHHRI…EGLPEPLTLR (89 aa)). The tract at residues 293-302 (EPASQTTIPI) is connecting peptide. The chain crosses the membrane as a helical span at residues 303–326 (VGIFAGLVLLGAVVTGATVVAAVM). The Cytoplasmic segment spans residues 327-359 (WRKKSSGGKGGSYSKAEWSDSAQGSESLTACKA). A disordered region spans residues 330 to 359 (KSSGGKGGSYSKAEWSDSAQGSESLTACKA). The span at 346 to 359 (DSAQGSESLTACKA) shows a compositional bias: polar residues. Position 351 is a phosphoserine (serine 351).

It belongs to the MHC class I family. In terms of assembly, heterodimer of an alpha chain and a beta chain (beta-2-microglobulin).

It localises to the membrane. Involved in the presentation of foreign antigens to the immune system. The chain is Popy class I histocompatibility antigen, alpha chain E (Popy-E) from Pongo pygmaeus (Bornean orangutan).